The chain runs to 286 residues: Bifunctional protein FolD (286 aa).

NADP(+)-binding positions include 164–166 (GRS), Ser-193, and Ile-234.

The protein belongs to the tetrahydrofolate dehydrogenase/cyclohydrolase family. As to quaternary structure, homodimer.

It catalyses the reaction (6R)-5,10-methylene-5,6,7,8-tetrahydrofolate + NADP(+) = (6R)-5,10-methenyltetrahydrofolate + NADPH. The catalysed reaction is (6R)-5,10-methenyltetrahydrofolate + H2O = (6R)-10-formyltetrahydrofolate + H(+). The protein operates within one-carbon metabolism; tetrahydrofolate interconversion. Functionally, catalyzes the oxidation of 5,10-methylenetetrahydrofolate to 5,10-methenyltetrahydrofolate and then the hydrolysis of 5,10-methenyltetrahydrofolate to 10-formyltetrahydrofolate. The sequence is that of Bifunctional protein FolD from Nitratidesulfovibrio vulgaris (strain ATCC 29579 / DSM 644 / CCUG 34227 / NCIMB 8303 / VKM B-1760 / Hildenborough) (Desulfovibrio vulgaris).